We begin with the raw amino-acid sequence, 1205 residues long: Partitioning defective 3 homolog B (1205 aa).

Disordered regions lie at residues 83-104 and 137-165; these read EPLH…PDAF and VRRS…SLKL. Ser-100 is subject to Phosphoserine. The PDZ 1 domain maps to 201–289; the sequence is TRTVEISGEG…SPSVLLHVLP (89 aa). The tract at residues 318-374 is disordered; it reads VPPPVHGKSGLKTANLTGTDSPETDASASLQQNKSPRVPRLGGKPSSPSLSPLMGFG. The span at 329-352 shows a compositional bias: polar residues; sequence KTANLTGTDSPETDASASLQQNKS. 3 positions are modified to phosphoserine: Ser-346, Ser-352, and Ser-368. The segment covering 356-374 has biased composition (low complexity); that stretch reads PRLGGKPSSPSLSPLMGFG. 2 PDZ domains span residues 383 to 468 and 498 to 585; these read KIDL…VIAR and EIPL…GMIQ. Phosphoserine occurs at positions 635, 710, 728, 730, 746, 749, and 801. The segment at 707–743 is disordered; sequence ASKSMDLVPDESKVHSLAGQKSESPSKDFGPTLGLKK. 2 disordered regions span residues 784–921 and 1111–1205; these read AIDK…KHQE and PYYP…TAAV. The segment covering 806–822 has biased composition (polar residues); that stretch reads HSGQGALNCESAPQGNS. Basic and acidic residues-rich tracts occupy residues 838–865 and 881–921; these read KEKE…DPER and KKED…KHQE. Ser-1184 bears the Phosphoserine mark.

It belongs to the PAR3 family. As to quaternary structure, interacts with PARD6B. Interacts with INSC/inscuteable. Highly expressed in kidney, lung and skeletal muscle. Expressed at intermediate levels in brain, heart, placenta, liver and pancreas. Isoform 1 is predominant, while isoform 2 and isoform 3 are expressed at lower levels.

The protein resides in the endomembrane system. It localises to the cell junction. It is found in the tight junction. Functionally, putative adapter protein involved in asymmetrical cell division and cell polarization processes. May play a role in the formation of epithelial tight junctions. This is Partitioning defective 3 homolog B (PARD3B) from Homo sapiens (Human).